A 509-amino-acid chain; its full sequence is Subtelomeric hrmA-associated cluster protein AFUA_5G14880 (509 aa).

Functionally, part of the subtelomeric hrmA-associated cluster (HAC) containing genes that alter the hyphal surface (such as reduced total chitin or increased beta-glucan exposure) and perturb inter-hyphal interactions within the developing biofilms, resulting in a loss of vertically aligned polarized growing filaments. Consequently, this hypoxia-typic morphotype (called H-MORPH) with altered biofilm architecture leads to increased hypoxia fitness, increased host inflammation, rapid disease progression, and mortality in a murine model of invasive aspergillosis. This is Subtelomeric hrmA-associated cluster protein AFUA_5G14880 from Aspergillus fumigatus (strain ATCC MYA-4609 / CBS 101355 / FGSC A1100 / Af293) (Neosartorya fumigata).